Here is a 158-residue protein sequence, read N- to C-terminus: Transcription factor BTF3 homolog 4 (158 aa).

Position 5 is an N6-methyllysine (Lys5). In terms of domain architecture, NAC-A/B spans Thr33–Leu98. Position 111 is a phosphothreonine (Thr111). The tract at residues Gln123 to Asn158 is disordered. Residues Asp134–Asp150 show a composition bias toward acidic residues.

This sequence belongs to the NAC-beta family.

In Bos taurus (Bovine), this protein is Transcription factor BTF3 homolog 4 (BTF3L4).